We begin with the raw amino-acid sequence, 234 residues long: Leucyl/phenylalanyl-tRNA--protein transferase (234 aa).

The protein belongs to the L/F-transferase family.

It localises to the cytoplasm. The catalysed reaction is N-terminal L-lysyl-[protein] + L-leucyl-tRNA(Leu) = N-terminal L-leucyl-L-lysyl-[protein] + tRNA(Leu) + H(+). It carries out the reaction N-terminal L-arginyl-[protein] + L-leucyl-tRNA(Leu) = N-terminal L-leucyl-L-arginyl-[protein] + tRNA(Leu) + H(+). The enzyme catalyses L-phenylalanyl-tRNA(Phe) + an N-terminal L-alpha-aminoacyl-[protein] = an N-terminal L-phenylalanyl-L-alpha-aminoacyl-[protein] + tRNA(Phe). In terms of biological role, functions in the N-end rule pathway of protein degradation where it conjugates Leu, Phe and, less efficiently, Met from aminoacyl-tRNAs to the N-termini of proteins containing an N-terminal arginine or lysine. In Shigella boydii serotype 18 (strain CDC 3083-94 / BS512), this protein is Leucyl/phenylalanyl-tRNA--protein transferase.